Here is a 419-residue protein sequence, read N- to C-terminus: Subtilisin-like protease 2 (419 aa).

An N-terminal signal peptide occupies residues 1–16 (MQLLNFGLLLLPFVAG). The propeptide occupies 17–122 (DLAPQPEPLL…VHPDQHVYLA (106 aa)). One can recognise an Inhibitor I9 domain in the interval 36-122 (QYIVTLKEGL…VHPDQHVYLA (87 aa)). Positions 131–419 (RWGLGYMSSK…IQERKFKLPK (289 aa)) constitute a Peptidase S8 domain. Catalysis depends on charge relay system residues D169 and H201. 3 N-linked (GlcNAc...) asparagine glycosylation sites follow: N248, N261, and N348. The active-site Charge relay system is the S357. A glycan (N-linked (GlcNAc...) asparagine) is linked at N388.

The protein belongs to the peptidase S8 family.

The protein resides in the secreted. Functionally, secreted subtilisin-like serine protease with keratinolytic activity that contributes to pathogenicity. The sequence is that of Subtilisin-like protease 2 (SUB2) from Trichophyton verrucosum (Cattle ringworm fungus).